The sequence spans 785 residues: Disintegrin and metalloproteinase domain-containing protein B (785 aa).

An N-terminal signal peptide occupies residues 1 to 26; that stretch reads MRFLKSALPFVASALSLLSVQAAARS. Over 27-703 the chain is Extracellular; the sequence is QEPSAIQHVS…GSWVEQHKNL (677 aa). Residues 279–507 enclose the Peptidase M12B domain; it reads KQVALVGIAA…NSVKSSCLSD (229 aa). N-linked (GlcNAc...) asparagine glycans are attached at residues asparagine 322, asparagine 329, and asparagine 355. 2 cysteine pairs are disulfide-bonded: cysteine 398–cysteine 492 and cysteine 446–cysteine 464. A Zn(2+)-binding site is contributed by histidine 429. Glutamate 430 is an active-site residue. Histidine 433 and histidine 439 together coordinate Zn(2+). The Disintegrin domain occupies 516–605; it reads GSQCGNGIVE…TCPADSFKKD (90 aa). 3 N-linked (GlcNAc...) asparagine glycosylation sites follow: asparagine 561, asparagine 593, and asparagine 640. Residues cysteine 577 and cysteine 597 are joined by a disulfide bond. The helical transmembrane segment at 704-724 threads the bilayer; the sequence is VIGVACGVGGLLVLSILWCMI. The Cytoplasmic segment spans residues 725–785; the sequence is NRCRRARTVV…GPYQSATRYA (61 aa). The interval 737 to 785 is disordered; sequence PPMRPWPGPMPPPPPQMGQWAGPNRGYQGLRAEPPPPYPGPYQSATRYA. Positions 739 to 752 are enriched in pro residues; that stretch reads MRPWPGPMPPPPPQ.

The cofactor is Zn(2+).

It is found in the membrane. Its function is as follows. Probable zinc protease. The sequence is that of Disintegrin and metalloproteinase domain-containing protein B (ADM-B) from Aspergillus fumigatus (strain ATCC MYA-4609 / CBS 101355 / FGSC A1100 / Af293) (Neosartorya fumigata).